The chain runs to 383 residues: Dual-specificity RNA methyltransferase RlmN (383 aa).

The active-site Proton acceptor is glutamate 93. A Radical SAM core domain is found at 99–339 (EETRGTLCVS…TTIRKTRGDD (241 aa)). Cysteine 106 and cysteine 344 are joined by a disulfide. [4Fe-4S] cluster is bound by residues cysteine 113, cysteine 117, and cysteine 120. Residues 170 to 171 (GE), serine 202, 224 to 226 (SLH), and asparagine 301 contribute to the S-adenosyl-L-methionine site. Catalysis depends on cysteine 344, which acts as the S-methylcysteine intermediate.

This sequence belongs to the radical SAM superfamily. RlmN family. [4Fe-4S] cluster serves as cofactor.

Its subcellular location is the cytoplasm. The enzyme catalyses adenosine(2503) in 23S rRNA + 2 reduced [2Fe-2S]-[ferredoxin] + 2 S-adenosyl-L-methionine = 2-methyladenosine(2503) in 23S rRNA + 5'-deoxyadenosine + L-methionine + 2 oxidized [2Fe-2S]-[ferredoxin] + S-adenosyl-L-homocysteine. It carries out the reaction adenosine(37) in tRNA + 2 reduced [2Fe-2S]-[ferredoxin] + 2 S-adenosyl-L-methionine = 2-methyladenosine(37) in tRNA + 5'-deoxyadenosine + L-methionine + 2 oxidized [2Fe-2S]-[ferredoxin] + S-adenosyl-L-homocysteine. Specifically methylates position 2 of adenine 2503 in 23S rRNA and position 2 of adenine 37 in tRNAs. m2A2503 modification seems to play a crucial role in the proofreading step occurring at the peptidyl transferase center and thus would serve to optimize ribosomal fidelity. The chain is Dual-specificity RNA methyltransferase RlmN from Ralstonia pickettii (strain 12J).